A 256-amino-acid polypeptide reads, in one-letter code: 1-(5-phosphoribosyl)-5-[(5-phosphoribosylamino)methylideneamino] imidazole-4-carboxamide isomerase (256 aa).

Asp-8 acts as the Proton acceptor in catalysis. The active-site Proton donor is Asp-130.

It belongs to the HisA/HisF family.

It localises to the cytoplasm. The catalysed reaction is 1-(5-phospho-beta-D-ribosyl)-5-[(5-phospho-beta-D-ribosylamino)methylideneamino]imidazole-4-carboxamide = 5-[(5-phospho-1-deoxy-D-ribulos-1-ylimino)methylamino]-1-(5-phospho-beta-D-ribosyl)imidazole-4-carboxamide. Its pathway is amino-acid biosynthesis; L-histidine biosynthesis; L-histidine from 5-phospho-alpha-D-ribose 1-diphosphate: step 4/9. This Pelodictyon phaeoclathratiforme (strain DSM 5477 / BU-1) protein is 1-(5-phosphoribosyl)-5-[(5-phosphoribosylamino)methylideneamino] imidazole-4-carboxamide isomerase.